Here is a 783-residue protein sequence, read N- to C-terminus: ATP-dependent 6-phosphofructokinase (783 aa).

Over residues 1–10 (MAPPQAPVQP) the composition is skewed to pro residues. The tract at residues 1-20 (MAPPQAPVQPPKRRRIGVLT) is disordered. The interval 1 to 389 (MAPPQAPVQP…YHFSYINTST (389 aa)) is N-terminal catalytic PFK domain 1. Residues Gly23, 86–87 (RC), and 116–119 (GDGS) each bind ATP. Position 117 (Asp117) interacts with Mg(2+). Substrate-binding positions include 162-164 (SID), Arg199, 206-208 (MGR), Glu263, Arg291, and 297-300 (HTQR). Asp164 (proton acceptor) is an active-site residue. The interdomain linker stretch occupies residues 390–403 (PDHPKLLLPENKRM). Residues 404–783 (RIGIIHVGAP…NATWSCYENA (380 aa)) are C-terminal regulatory PFK domain 2. Beta-D-fructose 2,6-bisphosphate-binding positions include Arg480, 537 to 541 (TISNN), Arg575, 582 to 584 (QGG), Glu642, Arg668, 674 to 677 (HFQQ), and Arg749.

It belongs to the phosphofructokinase type A (PFKA) family. ATP-dependent PFK group I subfamily. Eukaryotic two domain clade 'E' sub-subfamily. As to quaternary structure, homotetramer. It depends on Mg(2+) as a cofactor.

The protein resides in the cytoplasm. It carries out the reaction beta-D-fructose 6-phosphate + ATP = beta-D-fructose 1,6-bisphosphate + ADP + H(+). It participates in carbohydrate degradation; glycolysis; D-glyceraldehyde 3-phosphate and glycerone phosphate from D-glucose: step 3/4. With respect to regulation, allosterically activated by ADP, AMP, or fructose 2,6-bisphosphate, and allosterically inhibited by ATP or citrate. Functionally, catalyzes the phosphorylation of D-fructose 6-phosphate to fructose 1,6-bisphosphate by ATP, the first committing step of glycolysis. The sequence is that of ATP-dependent 6-phosphofructokinase (pfkA) from Aspergillus niger.